Consider the following 433-residue polypeptide: Serine hydroxymethyltransferase (433 aa).

Residues L133 and 137 to 139 each bind (6S)-5,6,7,8-tetrahydrofolate; that span reads GHL. Residue K242 is modified to N6-(pyridoxal phosphate)lysine. Residue 366–368 participates in (6S)-5,6,7,8-tetrahydrofolate binding; it reads SPF.

The protein belongs to the SHMT family. In terms of assembly, homodimer. Pyridoxal 5'-phosphate serves as cofactor.

The protein localises to the cytoplasm. The catalysed reaction is (6R)-5,10-methylene-5,6,7,8-tetrahydrofolate + glycine + H2O = (6S)-5,6,7,8-tetrahydrofolate + L-serine. The protein operates within one-carbon metabolism; tetrahydrofolate interconversion. It functions in the pathway amino-acid biosynthesis; glycine biosynthesis; glycine from L-serine: step 1/1. Catalyzes the reversible interconversion of serine and glycine with tetrahydrofolate (THF) serving as the one-carbon carrier. This reaction serves as the major source of one-carbon groups required for the biosynthesis of purines, thymidylate, methionine, and other important biomolecules. Also exhibits THF-independent aldolase activity toward beta-hydroxyamino acids, producing glycine and aldehydes, via a retro-aldol mechanism. The polypeptide is Serine hydroxymethyltransferase (Beijerinckia indica subsp. indica (strain ATCC 9039 / DSM 1715 / NCIMB 8712)).